The chain runs to 739 residues: AN1-type zinc finger protein 4 (739 aa).

Residues 54–129 (MELFIETLTG…LKLVLAMRGG (76 aa)) enclose the Ubiquitin-like domain. A compositionally biased stretch (basic residues) spans 246 to 255 (KPKKVVKVKP). Disordered stretches follow at residues 246 to 270 (KPKK…STAA) and 287 to 316 (LPSG…RPVS). The AN1-type zinc finger occupies 673–720 (KKIMKHCFLCGKKTGLATSFECRCGNNFCASHRYAEAHGCTYDYKSAG). The Zn(2+) site is built by Cys679, Cys682, Cys694, Cys696, Cys701, His704, His710, and Cys712.

This Mus musculus (Mouse) protein is AN1-type zinc finger protein 4 (Zfand4).